The following is a 196-amino-acid chain: Glycerol-3-phosphate acyltransferase (196 aa).

4 consecutive transmembrane segments (helical) span residues 3-23, 78-98, 112-132, and 154-174; these read NAVF…ILVS, VGVV…PVFY, VLLA…IVVF, and WLLL…LLLI.

Belongs to the PlsY family. Probably interacts with PlsX.

The protein resides in the cell inner membrane. The enzyme catalyses an acyl phosphate + sn-glycerol 3-phosphate = a 1-acyl-sn-glycero-3-phosphate + phosphate. The protein operates within lipid metabolism; phospholipid metabolism. Its function is as follows. Catalyzes the transfer of an acyl group from acyl-phosphate (acyl-PO(4)) to glycerol-3-phosphate (G3P) to form lysophosphatidic acid (LPA). This enzyme utilizes acyl-phosphate as fatty acyl donor, but not acyl-CoA or acyl-ACP. The chain is Glycerol-3-phosphate acyltransferase from Methylobacillus flagellatus (strain ATCC 51484 / DSM 6875 / VKM B-1610 / KT).